The chain runs to 308 residues: ADP-L-glycero-D-manno-heptose-6-epimerase (308 aa).

Residues 10–11 (FI), 31–32 (DN), Lys-38, Lys-53, 75–79 (EGACS), and Asn-92 contribute to the NADP(+) site. Tyr-139 acts as the Proton acceptor in catalysis. Lys-143 lines the NADP(+) pocket. Asn-168 is a binding site for substrate. NADP(+) is bound by residues Val-169 and Lys-177. Catalysis depends on Lys-177, which acts as the Proton acceptor. Substrate-binding positions include Ser-179, His-186, 200–203 (FAGS), Arg-208, and Tyr-271.

Belongs to the NAD(P)-dependent epimerase/dehydratase family. HldD subfamily. In terms of assembly, homopentamer. NADP(+) is required as a cofactor.

It carries out the reaction ADP-D-glycero-beta-D-manno-heptose = ADP-L-glycero-beta-D-manno-heptose. The protein operates within nucleotide-sugar biosynthesis; ADP-L-glycero-beta-D-manno-heptose biosynthesis; ADP-L-glycero-beta-D-manno-heptose from D-glycero-beta-D-manno-heptose 7-phosphate: step 4/4. Catalyzes the interconversion between ADP-D-glycero-beta-D-manno-heptose and ADP-L-glycero-beta-D-manno-heptose via an epimerization at carbon 6 of the heptose. The protein is ADP-L-glycero-D-manno-heptose-6-epimerase of Haemophilus influenzae (strain PittGG).